A 362-amino-acid chain; its full sequence is sn-glycerol-3-phosphate import ATP-binding protein UgpC (362 aa).

The 232-residue stretch at 4–235 (LSFRNVKKTY…PASTFVAGFI (232 aa)) folds into the ABC transporter domain. 37–44 (GPSGCGKS) is an ATP binding site.

Belongs to the ABC transporter superfamily. sn-glycerol-3-phosphate importer (TC 3.A.1.1.3) family. The complex is composed of two ATP-binding proteins (UgpC), two transmembrane proteins (UgpA and UgpE) and a solute-binding protein (UgpB).

It is found in the cell inner membrane. It carries out the reaction sn-glycerol 3-phosphate(out) + ATP + H2O = sn-glycerol 3-phosphate(in) + ADP + phosphate + H(+). Its function is as follows. Part of the ABC transporter complex UgpBAEC involved in sn-glycerol-3-phosphate (G3P) import. Responsible for energy coupling to the transport system. This is sn-glycerol-3-phosphate import ATP-binding protein UgpC from Bordetella parapertussis (strain 12822 / ATCC BAA-587 / NCTC 13253).